A 341-amino-acid polypeptide reads, in one-letter code: GTPase Obg (341 aa).

Positions 1-159 constitute an Obg domain; the sequence is MKFVDEALIK…RNLRLELRVL (159 aa). Positions 128-150 are disordered; sequence TRYKSSVNRSPRQTTPGSPGESR. Polar residues predominate over residues 129–144; it reads RYKSSVNRSPRQTTPG. The 175-residue stretch at 160-334 folds into the OBG-type G domain; sequence ADVGLLGLPN…LCYALMQLID (175 aa). Residues 166–173, 191–195, 213–216, 283–286, and 315–317 contribute to the GTP site; these read GLPNAGKS, FTTLH, DIPG, NKID, and SAI. Positions 173 and 193 each coordinate Mg(2+).

The protein belongs to the TRAFAC class OBG-HflX-like GTPase superfamily. OBG GTPase family. Monomer. Mg(2+) is required as a cofactor.

Its subcellular location is the cytoplasm. An essential GTPase which binds GTP, GDP and possibly (p)ppGpp with moderate affinity, with high nucleotide exchange rates and a fairly low GTP hydrolysis rate. Plays a role in control of the cell cycle, stress response, ribosome biogenesis and in those bacteria that undergo differentiation, in morphogenesis control. The sequence is that of GTPase Obg from Legionella pneumophila subsp. pneumophila (strain Philadelphia 1 / ATCC 33152 / DSM 7513).